The following is a 344-amino-acid chain: Phosphate acyltransferase (344 aa).

This sequence belongs to the PlsX family. Homodimer. Probably interacts with PlsY.

The protein localises to the cytoplasm. The catalysed reaction is a fatty acyl-[ACP] + phosphate = an acyl phosphate + holo-[ACP]. It functions in the pathway lipid metabolism; phospholipid metabolism. Functionally, catalyzes the reversible formation of acyl-phosphate (acyl-PO(4)) from acyl-[acyl-carrier-protein] (acyl-ACP). This enzyme utilizes acyl-ACP as fatty acyl donor, but not acyl-CoA. In Actinobacillus pleuropneumoniae serotype 5b (strain L20), this protein is Phosphate acyltransferase.